A 593-amino-acid polypeptide reads, in one-letter code: Potassium channel KAT6 (593 aa).

The Cytoplasmic portion of the chain corresponds to 1–33 (MAASRSELLRPAFGEPSPSLGPFVVNPHTCSYR). A helical membrane pass occupies residues 34–54 (WWQKFLIVLVLYTAWASPFEL). Topologically, residues 55–64 (AMEKSASAAL) are extracellular. The chain crosses the membrane as a helical span at residues 65–85 (AVTELVVDAFFAVDIAVSFFV). Topologically, residues 86–106 (AYRDASTGLLVTDRKKIATRH) are cytoplasmic. Residues 107–129 (LARPCLALDVASTIPLQMIYRIV) form a helical membrane-spanning segment. Over 130–138 (SGKRQALYG) the chain is Extracellular. Residues 139-159 (LLNLLRLWRLRRVSKLFARLE) traverse the membrane as a helical; Voltage-sensor segment. The Cytoplasmic segment spans residues 160–173 (KDIRFSYLWTRLIK). A helical transmembrane segment spans residues 174 to 194 (LLYVTLFAVHFASCIYLWMAF). Over 195–221 (HHKAKELTWIGSQFHGFEDRSVWFCYT) the chain is Extracellular. The pore-forming intramembrane region spans 222–241 (CAVYWSITTLATVGYGDLHA). The Extracellular portion of the chain corresponds to 242–247 (ANTGEM). A helical membrane pass occupies residues 248 to 268 (LFSIAFMLFNMGLTSYIIGNI). Residues 269-593 (TNLVVHETTN…RDGDHLFFSW (325 aa)) are Cytoplasmic-facing. Position 350–470 (350–470 (LFQGVSDKLV…VVVFSNFVLY (121 aa))) interacts with a nucleoside 3',5'-cyclic phosphate. The KHA domain maps to 522 to 593 (RVSIHEHLLN…RDGDHLFFSW (72 aa)).

It belongs to the potassium channel family. Plant (TC 1.A.1.4) subfamily.

It is found in the membrane. Probable inward-rectifying potassium channel. Assuming opened or closed conformations in response to the voltage difference across the membrane, the channel is activated by hyperpolarization. The protein is Potassium channel KAT6 of Oryza sativa subsp. japonica (Rice).